We begin with the raw amino-acid sequence, 346 residues long: Probable dual-specificity RNA methyltransferase RlmN (346 aa).

Glu-91 serves as the catalytic Proton acceptor. The 229-residue stretch at Thr-97–Glu-325 folds into the Radical SAM core domain. A disulfide bond links Cys-104 and Cys-330. [4Fe-4S] cluster-binding residues include Cys-111, Cys-115, and Cys-118. S-adenosyl-L-methionine-binding positions include Gly-158–Glu-159, Ser-188, Ser-211–His-213, and Asn-287. The active-site S-methylcysteine intermediate is the Cys-330.

The protein belongs to the radical SAM superfamily. RlmN family. Requires [4Fe-4S] cluster as cofactor.

It is found in the cytoplasm. The enzyme catalyses adenosine(2503) in 23S rRNA + 2 reduced [2Fe-2S]-[ferredoxin] + 2 S-adenosyl-L-methionine = 2-methyladenosine(2503) in 23S rRNA + 5'-deoxyadenosine + L-methionine + 2 oxidized [2Fe-2S]-[ferredoxin] + S-adenosyl-L-homocysteine. It catalyses the reaction adenosine(37) in tRNA + 2 reduced [2Fe-2S]-[ferredoxin] + 2 S-adenosyl-L-methionine = 2-methyladenosine(37) in tRNA + 5'-deoxyadenosine + L-methionine + 2 oxidized [2Fe-2S]-[ferredoxin] + S-adenosyl-L-homocysteine. Functionally, specifically methylates position 2 of adenine 2503 in 23S rRNA and position 2 of adenine 37 in tRNAs. The protein is Probable dual-specificity RNA methyltransferase RlmN of Picosynechococcus sp. (strain ATCC 27264 / PCC 7002 / PR-6) (Agmenellum quadruplicatum).